The sequence spans 211 residues: Protein-L-isoaspartate O-methyltransferase (211 aa).

Ser-60 is an active-site residue.

Belongs to the methyltransferase superfamily. L-isoaspartyl/D-aspartyl protein methyltransferase family.

Its subcellular location is the cytoplasm. The catalysed reaction is [protein]-L-isoaspartate + S-adenosyl-L-methionine = [protein]-L-isoaspartate alpha-methyl ester + S-adenosyl-L-homocysteine. Its function is as follows. Catalyzes the methyl esterification of L-isoaspartyl residues in peptides and proteins that result from spontaneous decomposition of normal L-aspartyl and L-asparaginyl residues. It plays a role in the repair and/or degradation of damaged proteins. This Pseudomonas fluorescens (strain SBW25) protein is Protein-L-isoaspartate O-methyltransferase.